We begin with the raw amino-acid sequence, 291 residues long: Porphobilinogen deaminase (291 aa).

S-(dipyrrolylmethanemethyl)cysteine is present on Cys-238.

It belongs to the HMBS family. Monomer. Dipyrromethane serves as cofactor.

It catalyses the reaction 4 porphobilinogen + H2O = hydroxymethylbilane + 4 NH4(+). Its pathway is porphyrin-containing compound metabolism; protoporphyrin-IX biosynthesis; coproporphyrinogen-III from 5-aminolevulinate: step 2/4. Functionally, tetrapolymerization of the monopyrrole PBG into the hydroxymethylbilane pre-uroporphyrinogen in several discrete steps. The sequence is that of Porphobilinogen deaminase from Clostridium beijerinckii (strain ATCC 51743 / NCIMB 8052) (Clostridium acetobutylicum).